The chain runs to 259 residues: Deoxyribose-phosphate aldolase (259 aa).

Asp102 (proton donor/acceptor) is an active-site residue. Lys167 acts as the Schiff-base intermediate with acetaldehyde in catalysis. The active-site Proton donor/acceptor is Lys201.

The protein belongs to the DeoC/FbaB aldolase family. DeoC type 2 subfamily.

It is found in the cytoplasm. It carries out the reaction 2-deoxy-D-ribose 5-phosphate = D-glyceraldehyde 3-phosphate + acetaldehyde. The protein operates within carbohydrate degradation; 2-deoxy-D-ribose 1-phosphate degradation; D-glyceraldehyde 3-phosphate and acetaldehyde from 2-deoxy-alpha-D-ribose 1-phosphate: step 2/2. Functionally, catalyzes a reversible aldol reaction between acetaldehyde and D-glyceraldehyde 3-phosphate to generate 2-deoxy-D-ribose 5-phosphate. The polypeptide is Deoxyribose-phosphate aldolase (Shigella boydii serotype 4 (strain Sb227)).